We begin with the raw amino-acid sequence, 484 residues long: Phosphomevalonate kinase erg8 (484 aa).

The segment at 54–77 is disordered; it reads REAASGSAHGRSDTPQAEGNVHGD. 184–194 contacts ATP; it reads AHKTGLGSSAA.

The protein belongs to the GHMP kinase family. Mevalonate kinase subfamily.

The catalysed reaction is (R)-5-phosphomevalonate + ATP = (R)-5-diphosphomevalonate + ADP. It functions in the pathway isoprenoid biosynthesis; isopentenyl diphosphate biosynthesis via mevalonate pathway; isopentenyl diphosphate from (R)-mevalonate: step 2/3. Its function is as follows. Phosphomevalonate kinase; part of the second module of ergosterol biosynthesis pathway that includes the middle steps of the pathway. Erg8 converts 5-phosphomevalonate to 5-diphosphomevalonate. The second module is carried out in the vacuole and involves the formation of farnesyl diphosphate, which is also an important intermediate in the biosynthesis of ubiquinone, dolichol, heme and prenylated proteins. Activity by the mevalonate kinase erg12 (AFUA_4G07780) first converts mevalonate into 5-phosphomevalonate. 5-phosphomevalonate is then further converted to 5-diphosphomevalonate by the phosphomevalonate kinase erg8 (AFUA_5G10680). The diphosphomevalonate decarboxylase mvd1 (AFUA_4G07130) then produces isopentenyl diphosphate. The isopentenyl-diphosphate delta-isomerase idi1 (AFUA_6G11160) then catalyzes the 1,3-allylic rearrangement of the homoallylic substrate isopentenyl (IPP) to its highly electrophilic allylic isomer, dimethylallyl diphosphate (DMAPP). Finally the farnesyl diphosphate synthase erg20 (AFUA_5G02450) catalyzes the sequential condensation of isopentenyl pyrophosphate with dimethylallyl pyrophosphate, and then with the resultant geranylpyrophosphate to the ultimate product farnesyl pyrophosphate. This Aspergillus fumigatus (strain ATCC MYA-4609 / CBS 101355 / FGSC A1100 / Af293) (Neosartorya fumigata) protein is Phosphomevalonate kinase erg8.